Here is a 408-residue protein sequence, read N- to C-terminus: Probable acyl-CoA dehydrogenase 6 (408 aa).

The active-site Proton acceptor is the Glu265.

Belongs to the acyl-CoA dehydrogenase family. As to quaternary structure, homotetramer. FAD is required as a cofactor.

It carries out the reaction 3-methylbutanoyl-CoA + oxidized [electron-transfer flavoprotein] + H(+) = 3-methylbut-2-enoyl-CoA + reduced [electron-transfer flavoprotein]. It functions in the pathway amino-acid degradation; L-leucine degradation; (S)-3-hydroxy-3-methylglutaryl-CoA from 3-isovaleryl-CoA: step 1/3. The protein is Probable acyl-CoA dehydrogenase 6 (acdh-6) of Caenorhabditis elegans.